A 565-amino-acid polypeptide reads, in one-letter code: Effector protease OspD3 (565 aa).

This sequence belongs to the Toxin_15 family.

It localises to the secreted. In terms of biological role, effector protease that disrupts necroptosis in host cells by mediating proteolytic cleavage of host RIPK1 and RIPK3. The chain is Effector protease OspD3 from Shigella flexneri.